A 343-amino-acid chain; its full sequence is Sodium/bile acid cotransporter 7-A (343 aa).

Over 1–10 (MGLLERLRKE) the chain is Cytoplasmic. The helical transmembrane segment at 11–31 (WFIVGIILVIAAAKLEPTVGV) threads the bilayer. The Extracellular portion of the chain corresponds to 32-37 (KGGPLK). The helical transmembrane segment at 38 to 58 (PEITITYIAVSAIFFNSGLSL) threads the bilayer. The Cytoplasmic portion of the chain corresponds to 59–71 (KTEELTNALMHVK). A helical membrane pass occupies residues 72-92 (LHLFVQLFTLVFFPTAIWLFL). Residues 93–116 (QVLSLTPINEWLLKGLQTVSCMPP) are Extracellular-facing. The chain crosses the membrane as a helical span at residues 117-137 (PVSSAVILTKAVGGNEAAAIF). Position 138 (asparagine 138) is a topological domain, cytoplasmic. The helical transmembrane segment at 139 to 159 (SAFGSFLGIVVTPLLLLLFLG) threads the bilayer. Residues 160 to 163 (SSSS) are Extracellular-facing. The helical transmembrane segment at 164–184 (VPFTSIFSQLFMTVVVPLIIG) threads the bilayer. Topologically, residues 185-201 (QIVRRYIKDWLERKKPP) are cytoplasmic. A helical membrane pass occupies residues 202-222 (FGAISSCVLLMIIYTTFCDTF). Residues 223-234 (SNPNIDLDTFSL) are Extracellular-facing. A helical membrane pass occupies residues 235-255 (VVIVFIIFFIQLAFMLLTFLF). Over 256–270 (STSKNSGFTPADTVA) the chain is Cytoplasmic. The helical transmembrane segment at 271-291 (IVFCSTHKSLTLGIPMLKIVF) threads the bilayer. At 292–298 (VGYEHLS) the chain is on the extracellular side. Residues 299–319 (LISVPLLIYHPAQILLGSVLV) traverse the membrane as a helical segment. At 320-343 (PTIKSWMLSRQKALKLTRQPKIPL) the chain is on the cytoplasmic side.

Belongs to the bile acid:sodium symporter (BASS) (TC 2.A.28) family. In terms of tissue distribution, strongly expressed in small intestine. Moderately expressed in spleen. Weakly expressed in skeletal muscle. Not detected in other tissues tested.

Its subcellular location is the cell membrane. It localises to the endoplasmic reticulum membrane. The protein resides in the golgi apparatus membrane. Involved in teeth and skeletal development. Has an essential role in the biosynthesis and trafficking of glycosaminoglycans and glycoproteins to produce a proper functioning extracellular matrix. Required for extracellular matrix mineralization. Also involved in the regulation of cellular calcium homeostasis. Does not show transport activity towards bile acids or steroid sulfates. This is Sodium/bile acid cotransporter 7-A (slc10a7-a) from Xenopus laevis (African clawed frog).